Consider the following 113-residue polypeptide: Phosphorelay protein LuxU (113 aa).

The region spanning 18–113 (GEENVPILVN…THQCYSDLVH (96 aa)) is the HPt domain. His-57 carries the phosphohistidine modification.

Monomer.

Functionally, phosphorelay protein which receives sensory signals from a sensory kinase and transmit them to LuxO. At low cell density, a phosphoryl group is transferred from the sensory kinase, probably on His-57 and this phosphoryl group is further transferred to LuxO. This is Phosphorelay protein LuxU (luxU) from Vibrio cholerae serotype O1 (strain ATCC 39315 / El Tor Inaba N16961).